The following is a 96-amino-acid chain: Co-chaperonin GroES (96 aa).

This sequence belongs to the GroES chaperonin family. Heptamer of 7 subunits arranged in a ring. Interacts with the chaperonin GroEL.

The protein resides in the cytoplasm. In terms of biological role, together with the chaperonin GroEL, plays an essential role in assisting protein folding. The GroEL-GroES system forms a nano-cage that allows encapsulation of the non-native substrate proteins and provides a physical environment optimized to promote and accelerate protein folding. GroES binds to the apical surface of the GroEL ring, thereby capping the opening of the GroEL channel. In Cupriavidus necator (strain ATCC 17699 / DSM 428 / KCTC 22496 / NCIMB 10442 / H16 / Stanier 337) (Ralstonia eutropha), this protein is Co-chaperonin GroES.